We begin with the raw amino-acid sequence, 85 residues long: U1-theraphotoxin-Hs1a (85 aa).

The first 22 residues, Met-1–Ala-22, serve as a signal peptide directing secretion. Positions Glu-23–Arg-48 are excised as a propeptide. Cystine bridges form between Cys-52/Cys-66, Cys-56/Cys-77, and Cys-71/Cys-82.

In terms of assembly, heterodimer composed of the two variants Ile-58 and Gln-58. As to expression, expressed by the venom gland.

Its subcellular location is the secreted. Functionally, lethal neurotoxin that blocks neuromuscular transmission. Acts cooperatively to potentiate the activity of huwentoxin-I. This toxin is active against insects. This chain is U1-theraphotoxin-Hs1a, found in Cyriopagopus schmidti (Chinese bird spider).